We begin with the raw amino-acid sequence, 256 residues long: Thiazole synthase (256 aa).

Lys96 serves as the catalytic Schiff-base intermediate with DXP. 1-deoxy-D-xylulose 5-phosphate is bound by residues Gly157, 183–184 (AG), and 205–206 (NT).

This sequence belongs to the ThiG family. As to quaternary structure, homotetramer. Forms heterodimers with either ThiH or ThiS.

Its subcellular location is the cytoplasm. It catalyses the reaction [ThiS sulfur-carrier protein]-C-terminal-Gly-aminoethanethioate + 2-iminoacetate + 1-deoxy-D-xylulose 5-phosphate = [ThiS sulfur-carrier protein]-C-terminal Gly-Gly + 2-[(2R,5Z)-2-carboxy-4-methylthiazol-5(2H)-ylidene]ethyl phosphate + 2 H2O + H(+). The protein operates within cofactor biosynthesis; thiamine diphosphate biosynthesis. Functionally, catalyzes the rearrangement of 1-deoxy-D-xylulose 5-phosphate (DXP) to produce the thiazole phosphate moiety of thiamine. Sulfur is provided by the thiocarboxylate moiety of the carrier protein ThiS. In vitro, sulfur can be provided by H(2)S. This is Thiazole synthase from Clostridium beijerinckii (strain ATCC 51743 / NCIMB 8052) (Clostridium acetobutylicum).